The chain runs to 476 residues: RuvB-like helicase 2 (476 aa).

76–83 (GPPSTGKT) lines the ATP pocket.

Belongs to the RuvB family. As to quaternary structure, may form heterododecamers with RVB1. Component of the SWR1 chromatin remodeling complex, the INO80 chromatin remodeling complex, and of the R2TP complex.

It localises to the nucleus. The catalysed reaction is ATP + H2O = ADP + phosphate + H(+). Its function is as follows. DNA helicase which participates in several chromatin remodeling complexes, including the SWR1 and the INO80 complexes. The SWR1 complex mediates the ATP-dependent exchange of histone H2A for the H2A variant HZT1 leading to transcriptional regulation of selected genes by chromatin remodeling. The INO80 complex remodels chromatin by shifting nucleosomes and is involved in DNA repair. Also involved in pre-rRNA processing. This is RuvB-like helicase 2 (RVB2) from Candida glabrata (strain ATCC 2001 / BCRC 20586 / JCM 3761 / NBRC 0622 / NRRL Y-65 / CBS 138) (Yeast).